We begin with the raw amino-acid sequence, 548 residues long: Hydroxylamine reductase (548 aa).

[4Fe-4S] cluster-binding residues include cysteine 3, cysteine 6, cysteine 15, and cysteine 21. Hybrid [4Fe-2O-2S] cluster is bound by residues histidine 240, glutamate 264, cysteine 308, cysteine 402, cysteine 430, cysteine 455, glutamate 490, and lysine 492. Cysteine 402 carries the cysteine persulfide modification.

The protein belongs to the HCP family. It depends on [4Fe-4S] cluster as a cofactor. The cofactor is hybrid [4Fe-2O-2S] cluster.

It is found in the cytoplasm. The catalysed reaction is A + NH4(+) + H2O = hydroxylamine + AH2 + H(+). In terms of biological role, catalyzes the reduction of hydroxylamine to form NH(3) and H(2)O. This chain is Hydroxylamine reductase, found in Parabacteroides distasonis (strain ATCC 8503 / DSM 20701 / CIP 104284 / JCM 5825 / NCTC 11152).